Consider the following 518-residue polypeptide: Integrator complex subunit 14 (518 aa).

A VWFA domain is found at 2 to 204; that stretch reads PTVVVMDVSL…KNVQSMFGKL (203 aa). Residues Ser-10, Ser-12, and Thr-86 each contribute to the Mg(2+) site.

It belongs to the Integrator subunit 14 family. As to quaternary structure, component of the Integrator complex, composed of core subunits INTS1, INTS2, INTS3, INTS4, INTS5, INTS6, INTS7, INTS8, INTS9/RC74, INTS10, INTS11/CPSF3L, INTS12, INTS13, INTS14 and INTS15. The core complex associates with protein phosphatase 2A subunits PPP2CA and PPP2R1A, to form the Integrator-PP2A (INTAC) complex. INTS14 is part of the tail subcomplex, composed of INTS10, INTS13, INTS14 and INTS15.

It is found in the nucleus. Its function is as follows. Component of the integrator complex, a multiprotein complex that terminates RNA polymerase II (Pol II) transcription in the promoter-proximal region of genes. The integrator complex provides a quality checkpoint during transcription elongation by driving premature transcription termination of transcripts that are unfavorably configured for transcriptional elongation: the complex terminates transcription by (1) catalyzing dephosphorylation of the C-terminal domain (CTD) of Pol II subunit POLR2A/RPB1 and SUPT5H/SPT5, (2) degrading the exiting nascent RNA transcript via endonuclease activity and (3) promoting the release of Pol II from bound DNA. The integrator complex is also involved in terminating the synthesis of non-coding Pol II transcripts, such as enhancer RNAs (eRNAs), small nuclear RNAs (snRNAs), telomerase RNAs and long non-coding RNAs (lncRNAs). Within the integrator complex, INTS14 is part of the integrator tail module that acts as a platform for the recruitment of transcription factors at promoters. The protein is Integrator complex subunit 14 of Xenopus tropicalis (Western clawed frog).